The following is a 3083-amino-acid chain: Genome polyprotein (3083 aa).

In terms of domain architecture, Peptidase S30 spans 173 to 313 (IVCVDDVNNL…VLFYSDVEHY (141 aa)). Serine 267 acts as the For P1 proteinase activity in catalysis. Residues 365-368 (KLSC) carry the Involved in interaction with stylet and aphid transmission motif. An Involved in virions binding and aphid transmission motif is present at residues 621 to 623 (PTK). In terms of domain architecture, Peptidase C6 spans 647–769 (MYIAKEGYCY…QSEMKHYRVG (123 aa)). Residues cysteine 655 and histidine 728 each act as for helper component proteinase activity in the active site. The Helicase ATP-binding domain maps to 1239–1391 (EIASSSEGEF…TQFAVKVKTE (153 aa)). 1252-1259 (GAVGSGKS) contacts ATP. A DECH box motif is present at residues 1341–1344 (DECH). One can recognise a Helicase C-terminal domain in the interval 1410–1569 (DMVQHGNNIL…GLSVTTHGVS (160 aa)). The short motif at 1894–1903 (KRGKVKGNNS) is the Nuclear localization signal element. O-(5'-phospho-RNA)-tyrosine is present on tyrosine 1918. The Peptidase C4 domain occupies 2045 to 2263 (SKSIYKGVRD…IAWGSLNLVD (219 aa)). Residues histidine 2090, aspartate 2125, and cysteine 2195 each act as for nuclear inclusion protein A activity in the active site. One can recognise a RdRp catalytic domain in the interval 2529–2653 (WLYCHADGSQ…AVKDEDSGLL (125 aa)). Positions 2808–2855 (QTREAGAGASKKDKDEDKDKKKDVASSSASEKAVATATKDKDVNAGSH) are disordered. Positions 2817–2831 (SKKDKDEDKDKKKDV) are enriched in basic and acidic residues. Positions 2832–2844 (ASSSASEKAVATA) are enriched in low complexity. A Phosphothreonine modification is found at threonine 3065.

The protein belongs to the potyviridae genome polyprotein family. In terms of assembly, interacts with host eIF4E protein (via cap-binding region); this interaction mediates the translation of the VPg-viral RNA conjugates. Part of a complex that comprises VPg, RNA, host EIF4E and EIF4G; this interaction mediates the translation of the VPg-viral RNA conjugates. In terms of processing, VPg is uridylylated by the polymerase and is covalently attached to the 5'-end of the genomic RNA. This uridylylated form acts as a nucleotide-peptide primer for the polymerase. Potyviral RNA is expressed as two polyproteins which undergo post-translational proteolytic processing. Genome polyprotein is processed by NIa-pro, P1 and HC-pro proteinases resulting in the production of at least ten individual proteins. P3N-PIPO polyprotein is cleaved by P1 and HC-pro proteinases resulting in the production of three individual proteins. The P1 proteinase and the HC-pro cleave only their respective C-termini autocatalytically. 6K1 is essential for proper proteolytic separation of P3 from CI.

It localises to the host cytoplasmic vesicle. The protein resides in the host nucleus. Its subcellular location is the virion. It catalyses the reaction RNA(n) + a ribonucleoside 5'-triphosphate = RNA(n+1) + diphosphate. It carries out the reaction Hydrolyzes glutaminyl bonds, and activity is further restricted by preferences for the amino acids in P6 - P1' that vary with the species of potyvirus, e.g. Glu-Xaa-Xaa-Tyr-Xaa-Gln-|-(Ser or Gly) for the enzyme from tobacco etch virus. The natural substrate is the viral polyprotein, but other proteins and oligopeptides containing the appropriate consensus sequence are also cleaved.. The catalysed reaction is Hydrolyzes a Gly-|-Gly bond at its own C-terminus, commonly in the sequence -Tyr-Xaa-Val-Gly-|-Gly, in the processing of the potyviral polyprotein.. Its function is as follows. Required for aphid transmission and also has proteolytic activity. Only cleaves a Gly-Gly dipeptide at its own C-terminus. Interacts with virions and aphid stylets. Acts as a suppressor of RNA-mediated gene silencing, also known as post-transcriptional gene silencing (PTGS), a mechanism of plant viral defense that limits the accumulation of viral RNAs. May have RNA-binding activity. Has helicase activity. It may be involved in replication. Functionally, indispensable for virus replication. Reduces the abundance of host transcripts related to jasmonic acid biosynthesis therefore altering the host defenses. In order to increase its own stability, decreases host protein degradation pathways. In terms of biological role, indispensable for virus replication. Its function is as follows. Mediates the cap-independent, EIF4E-dependent translation of viral genomic RNAs. Binds to the cap-binding site of host EIF4E and thus interferes with the host EIF4E-dependent mRNA export and translation. VPg-RNA directly binds EIF4E and is a template for transcription. Also forms trimeric complexes with EIF4E-EIF4G, which are templates for translation. Has RNA-binding and proteolytic activities. Functionally, an RNA-dependent RNA polymerase that plays an essential role in the virus replication. In terms of biological role, involved in aphid transmission, cell-to-cell and systemis movement, encapsidation of the viral RNA and in the regulation of viral RNA amplification. The chain is Genome polyprotein from Zucchini yellow mosaic virus (strain Singapore) (ZYMV).